The sequence spans 105 residues: MKFLALFFLALVGVAFAHDGGMGGMDMIKSYSILGAMIGLGIAAFGGAIGMGNAAAATITGTARNPGVGGKLLTTMFVAMAMIEAQVIYTLVFAIIAIYSNPFLS.

Transmembrane regions (helical) follow at residues S32–G52 and V78–I98.

It belongs to the ATPase C chain family. F-type ATPases have 2 components, F(1) - the catalytic core - and F(0) - the membrane proton channel. F(1) has five subunits: alpha(3), beta(3), gamma(1), delta(1), epsilon(1). F(0) has three main subunits: a(1), b(2) and c(10-14). The alpha and beta chains form an alternating ring which encloses part of the gamma chain. F(1) is attached to F(0) by a central stalk formed by the gamma and epsilon chains, while a peripheral stalk is formed by the delta and b chains.

It is found in the cell inner membrane. In terms of biological role, f(1)F(0) ATP synthase produces ATP from ADP in the presence of a proton or sodium gradient. F-type ATPases consist of two structural domains, F(1) containing the extramembraneous catalytic core and F(0) containing the membrane proton channel, linked together by a central stalk and a peripheral stalk. During catalysis, ATP synthesis in the catalytic domain of F(1) is coupled via a rotary mechanism of the central stalk subunits to proton translocation. Functionally, key component of the F(0) channel; it plays a direct role in translocation across the membrane. A homomeric c-ring of between 10-14 subunits forms the central stalk rotor element with the F(1) delta and epsilon subunits. The chain is ATP synthase subunit c from Helicobacter pylori (strain ATCC 700392 / 26695) (Campylobacter pylori).